Here is a 341-residue protein sequence, read N- to C-terminus: L-threonine 3-dehydrogenase (341 aa).

Cysteine 38 is a binding site for Zn(2+). Active-site charge relay system residues include threonine 40 and histidine 43. Zn(2+)-binding residues include histidine 63, glutamate 64, cysteine 93, cysteine 96, cysteine 99, and cysteine 107. NAD(+)-binding positions include isoleucine 175, aspartate 195, arginine 200, leucine 262–isoleucine 264, and isoleucine 286–tyrosine 287.

Belongs to the zinc-containing alcohol dehydrogenase family. As to quaternary structure, homotetramer. It depends on Zn(2+) as a cofactor.

Its subcellular location is the cytoplasm. The enzyme catalyses L-threonine + NAD(+) = (2S)-2-amino-3-oxobutanoate + NADH + H(+). The protein operates within amino-acid degradation; L-threonine degradation via oxydo-reductase pathway; glycine from L-threonine: step 1/2. Catalyzes the NAD(+)-dependent oxidation of L-threonine to 2-amino-3-ketobutyrate. This chain is L-threonine 3-dehydrogenase, found in Yersinia enterocolitica serotype O:8 / biotype 1B (strain NCTC 13174 / 8081).